An 859-amino-acid polypeptide reads, in one-letter code: Bifunctional uridylyltransferase/uridylyl-removing enzyme (859 aa).

The segment at methionine 1–leucine 325 is uridylyltransferase. The segment at serine 326–leucine 682 is uridylyl-removing. Residues valine 444 to leucine 566 enclose the HD domain. 2 consecutive ACT domains span residues glutamine 683 to serine 762 and isoleucine 791 to valine 859.

This sequence belongs to the GlnD family. Mg(2+) is required as a cofactor.

The catalysed reaction is [protein-PII]-L-tyrosine + UTP = [protein-PII]-uridylyl-L-tyrosine + diphosphate. The enzyme catalyses [protein-PII]-uridylyl-L-tyrosine + H2O = [protein-PII]-L-tyrosine + UMP + H(+). Its activity is regulated as follows. Uridylyltransferase (UTase) activity is inhibited by glutamine, while glutamine activates uridylyl-removing (UR) activity. Functionally, modifies, by uridylylation and deuridylylation, the PII regulatory proteins (GlnB and homologs), in response to the nitrogen status of the cell that GlnD senses through the glutamine level. Under low glutamine levels, catalyzes the conversion of the PII proteins and UTP to PII-UMP and PPi, while under higher glutamine levels, GlnD hydrolyzes PII-UMP to PII and UMP (deuridylylation). Thus, controls uridylylation state and activity of the PII proteins, and plays an important role in the regulation of nitrogen fixation and metabolism. The sequence is that of Bifunctional uridylyltransferase/uridylyl-removing enzyme from Burkholderia vietnamiensis (strain G4 / LMG 22486) (Burkholderia cepacia (strain R1808)).